We begin with the raw amino-acid sequence, 1161 residues long: DNA-directed RNA polymerase III subunit 2 (1161 aa).

A C4-type zinc finger spans residues 1104–1125; it reads CRACGLLGYYNYKLKKAVCTTC.

This sequence belongs to the RNA polymerase beta chain family. Component of the RNA polymerase III (Pol III) complex consisting of 17 subunits.

It localises to the nucleus. It carries out the reaction RNA(n) + a ribonucleoside 5'-triphosphate = RNA(n+1) + diphosphate. Functionally, DNA-dependent RNA polymerase catalyzes the transcription of DNA into RNA using the four ribonucleoside triphosphates as substrates. Second largest core component of RNA polymerase III which synthesizes small RNAs, such as 5S rRNA and tRNAs. Proposed to contribute to the polymerase catalytic activity and forms the polymerase active center together with the largest subunit. Pol III is composed of mobile elements and NRPC2 is part of the core element with the central large cleft and probably a clamp element that moves to open and close the cleft. Essential for the completion of the three rounds of mitosis in female megaspores required for the development of mature gametophytes. This chain is DNA-directed RNA polymerase III subunit 2, found in Arabidopsis thaliana (Mouse-ear cress).